Reading from the N-terminus, the 176-residue chain is Membrane-anchored junction protein (176 aa).

Residues 1–151 (MSLKPFTYPF…QHNSPPPKER (151 aa)) are Nuclear-facing. The disordered stretch occupies residues 59–150 (AVMRKRKHMD…LQHNSPPPKE (92 aa)). The span at 95 to 107 (PPVETRRNRERKT) shows a compositional bias: basic and acidic residues. Polar residues predominate over residues 108-120 (QQGLQETLASDIT). The helical transmembrane segment at 152–170 (AATGFFGFLSSLFPFRYFF) threads the bilayer. Over 171-176 (RKSSHS) the chain is Perinuclear space.

This sequence belongs to the MAJIN family. As to quaternary structure, component of the MAJIN-TERB1-TERB2 complex, composed of MAJIN, TERB1 and TERB2.

The protein resides in the nucleus inner membrane. The protein localises to the chromosome. Its subcellular location is the telomere. Meiosis-specific telomere-associated protein involved in meiotic telomere attachment to the nucleus inner membrane, a crucial step for homologous pairing and synapsis. Component of the MAJIN-TERB1-TERB2 complex, which promotes telomere cap exchange by mediating attachment of telomeric DNA to the inner nuclear membrane and replacement of the protective cap of telomeric chromosomes: in early meiosis, the MAJIN-TERB1-TERB2 complex associates with telomeric DNA and the shelterin/telosome complex. During prophase, the complex matures and promotes release of the shelterin/telosome complex from telomeric DNA. In the complex, MAJIN acts as the anchoring subunit to the nucleus inner membrane. MAJIN shows DNA-binding activity, possibly for the stabilization of telomere attachment on the nucleus inner membrane. This is Membrane-anchored junction protein from Homo sapiens (Human).